Consider the following 104-residue polypeptide: DNA-directed RNA polymerase subunit omega (104 aa).

Positions 60 to 104 (VIHPDPEGKREAVRRRAEEERLRKEEEERKIKEQIAKEKEEGEKI) are disordered. Residues 63 to 104 (PDPEGKREAVRRRAEEERLRKEEEERKIKEQIAKEKEEGEKI) show a composition bias toward basic and acidic residues.

This sequence belongs to the RNA polymerase subunit omega family. As to quaternary structure, the RNAP catalytic core consists of 2 alpha, 1 beta, 1 beta' and 1 omega subunit. When a sigma factor is associated with the core the holoenzyme is formed, which can initiate transcription.

The catalysed reaction is RNA(n) + a ribonucleoside 5'-triphosphate = RNA(n+1) + diphosphate. Functionally, promotes RNA polymerase assembly. Latches the N- and C-terminal regions of the beta' subunit thereby facilitating its interaction with the beta and alpha subunits. In Streptococcus sanguinis (strain SK36), this protein is DNA-directed RNA polymerase subunit omega.